We begin with the raw amino-acid sequence, 463 residues long: L-seryl-tRNA(Sec) selenium transferase (463 aa).

At K295 the chain carries N6-(pyridoxal phosphate)lysine.

Belongs to the SelA family. As to quaternary structure, homodecamer; pentamer of dimers. Binds only one seryl-tRNA(Sec) per dimer. Pyridoxal 5'-phosphate is required as a cofactor.

Its subcellular location is the cytoplasm. The catalysed reaction is L-seryl-tRNA(Sec) + selenophosphate + H(+) = L-selenocysteinyl-tRNA(Sec) + phosphate. The protein operates within aminoacyl-tRNA biosynthesis; selenocysteinyl-tRNA(Sec) biosynthesis; selenocysteinyl-tRNA(Sec) from L-seryl-tRNA(Sec) (bacterial route): step 1/1. In terms of biological role, converts seryl-tRNA(Sec) to selenocysteinyl-tRNA(Sec) required for selenoprotein biosynthesis. The sequence is that of L-seryl-tRNA(Sec) selenium transferase from Shigella flexneri serotype 5b (strain 8401).